Reading from the N-terminus, the 422-residue chain is Tyrosine--tRNA ligase (422 aa).

Tyr-36 is an L-tyrosine binding site. Residues 41–50 (PTAGSLHIGH) carry the 'HIGH' region motif. Tyr-174 and Gln-178 together coordinate L-tyrosine. A 'KMSKS' region motif is present at residues 234–238 (KFGKT). Lys-237 provides a ligand contact to ATP. Positions 356–420 (TDLVTLLVES…GKKQYRLVTW (65 aa)) constitute an S4 RNA-binding domain.

This sequence belongs to the class-I aminoacyl-tRNA synthetase family. TyrS type 1 subfamily. In terms of assembly, homodimer.

It is found in the cytoplasm. It catalyses the reaction tRNA(Tyr) + L-tyrosine + ATP = L-tyrosyl-tRNA(Tyr) + AMP + diphosphate + H(+). Functionally, catalyzes the attachment of tyrosine to tRNA(Tyr) in a two-step reaction: tyrosine is first activated by ATP to form Tyr-AMP and then transferred to the acceptor end of tRNA(Tyr). This Aeromonas hydrophila subsp. hydrophila (strain ATCC 7966 / DSM 30187 / BCRC 13018 / CCUG 14551 / JCM 1027 / KCTC 2358 / NCIMB 9240 / NCTC 8049) protein is Tyrosine--tRNA ligase.